We begin with the raw amino-acid sequence, 216 residues long: Large ribosomal subunit protein uL1B (216 aa).

At S11 the chain carries Phosphoserine.

Belongs to the universal ribosomal protein uL1 family. Component of the large ribosomal subunit (LSU). Mature yeast ribosomes consist of a small (40S) and a large (60S) subunit. The 40S small subunit contains 1 molecule of ribosomal RNA (18S rRNA) and at least 33 different proteins. The large 60S subunit contains 3 rRNA molecules (25S, 5.8S and 5S rRNA) and at least 46 different proteins. uL1 forms part of the L1 stalk.

The protein resides in the cytoplasm. Its function is as follows. Component of the ribosome, a large ribonucleoprotein complex responsible for the synthesis of proteins in the cell. The small ribosomal subunit (SSU) binds messenger RNAs (mRNAs) and translates the encoded message by selecting cognate aminoacyl-transfer RNA (tRNA) molecules. The large subunit (LSU) contains the ribosomal catalytic site termed the peptidyl transferase center (PTC), which catalyzes the formation of peptide bonds, thereby polymerizing the amino acids delivered by tRNAs into a polypeptide chain. The nascent polypeptides leave the ribosome through a tunnel in the LSU and interact with protein factors that function in enzymatic processing, targeting, and the membrane insertion of nascent chains at the exit of the ribosomal tunnel. uL1 forms part of the L1 stalk, a mobile element that plays a role in evacuating the exit-site tRNA. In Schizosaccharomyces pombe (strain 972 / ATCC 24843) (Fission yeast), this protein is Large ribosomal subunit protein uL1B (rpl101).